The sequence spans 313 residues: Beta-ketoacyl-[acyl-carrier-protein] synthase III (313 aa).

Residues Cys112 and His238 contribute to the active site. Residues 239-243 (QANIR) form an ACP-binding region. Residue Asn268 is part of the active site.

This sequence belongs to the thiolase-like superfamily. FabH family. As to quaternary structure, homodimer.

It localises to the cytoplasm. It catalyses the reaction malonyl-[ACP] + acetyl-CoA + H(+) = 3-oxobutanoyl-[ACP] + CO2 + CoA. It functions in the pathway lipid metabolism; fatty acid biosynthesis. Catalyzes the condensation reaction of fatty acid synthesis by the addition to an acyl acceptor of two carbons from malonyl-ACP. Catalyzes the first condensation reaction which initiates fatty acid synthesis and may therefore play a role in governing the total rate of fatty acid production. Possesses both acetoacetyl-ACP synthase and acetyl transacylase activities. Its substrate specificity determines the biosynthesis of branched-chain and/or straight-chain of fatty acids. The protein is Beta-ketoacyl-[acyl-carrier-protein] synthase III of Staphylococcus aureus (strain bovine RF122 / ET3-1).